The following is a 310-amino-acid chain: MATNDAVLKRLEQKGAEADQIIEYLKQQVALLKEKAILQATMREEKKLRVENAKLKKEIEELKQELILAEIHNGVEQVRVRLSTPLQTNCTASESVVQSPSVATTASPATKEQIKAGEEKKVKEKTEKKGEKKEKQQSAAASTDSKPIDASRLDLRIGCIVTAKKHPDADSLYVEEVDVGEAAPRTVVSGLVNHVPLEQMQNRMVVLLCNLKPAKMRGVLSQAMVMCASSPEKVEILAPPNGSVPGDRITFDAFPGEPDKELNPKKKIWEQIQPDLHTNAECVATYKGAPFEVKGKGVCRAQTMANSGIK.

A2 carries the post-translational modification N-acetylalanine. The interval 6–46 (AVLKRLEQKGAEADQIIEYLKQQVALLKEKAILQATMREEK) is required for fibroblast proliferation. The tract at residues 54-192 (KLKKEIEELK…APRTVVSGLV (139 aa)) is interaction with HSP90B1. The span at 92-110 (ASESVVQSPSVATTASPAT) shows a compositional bias: polar residues. Positions 92–147 (ASESVVQSPSVATTASPATKEQIKAGEEKKVKEKTEKKGEKKEKQQSAAASTDSKP) are disordered. The interval 101 to 115 (SVATTASPATKEQIK) is required for endothelial cell death. Over residues 112–136 (EQIKAGEEKKVKEKTEKKGEKKEKQ) the composition is skewed to basic and acidic residues. The tract at residues 115-190 (KAGEEKKVKE…EAAPRTVVSG (76 aa)) is required for endothelial cell migration. Phosphoserine is present on S138. Residues 149 to 250 (DASRLDLRIG…NGSVPGDRIT (102 aa)) enclose the tRNA-binding domain. N6-succinyllysine is present on K267.

As to quaternary structure, homodimer. Part of the multisynthetase complex (MSC), a multisubunit complex that groups tRNA ligases for Arg (RARS1), Asp (DARS1), Gln (QARS1), Ile (IARS1), Leu (LARS1), Lys (KARS1), Met (MARS1) the bifunctional ligase for Glu and Pro (EPRS1) and the auxiliary subunits AIMP1/p43, AIMP2/p38 and EEF1E1/p18. Interacts (via N-terminus) with RARS1 (via N-terminus). Part of a complex composed of RARS1, QARS1 and AIMP1. Interacts (via C-terminus) with SMURF2. Interacts (via N-terminus) with HSP90B1/gp96 (via C-terminus). Interacts with PSMA7. Interacts with TARS3. Post-translationally, cleaved by caspase-7 in response to apoptosis to produce EMAP-II. As to expression, highly expressed in salivary glands and pancreatic alpha cells in the adult (at protein level). In the embryo, expressed primarily at sites of tissue remodeling such as ganglia, developing bones and teeth.

Its subcellular location is the nucleus. It is found in the cytoplasm. The protein resides in the cytosol. The protein localises to the secreted. It localises to the endoplasmic reticulum. Its subcellular location is the golgi apparatus. In terms of biological role, non-catalytic component of the multisynthase complex. Stimulates the catalytic activity of cytoplasmic arginyl-tRNA synthase. Binds tRNA. Possesses inflammatory cytokine activity. Negatively regulates TGF-beta signaling through stabilization of SMURF2 by binding to SMURF2 and inhibiting its SMAD7-mediated degradation. Involved in glucose homeostasis through induction of glucagon secretion at low glucose levels. Promotes dermal fibroblast proliferation and wound repair. Regulates KDELR1-mediated retention of HSP90B1/gp96 in the endoplasmic reticulum. Plays a role in angiogenesis by inducing endothelial cell migration at low concentrations and endothelian cell apoptosis at high concentrations. Induces maturation of dendritic cells and monocyte cell adhesion. Modulates endothelial cell responses by degrading HIF-1A through interaction with PSMA7. This chain is Aminoacyl tRNA synthase complex-interacting multifunctional protein 1 (Aimp1), found in Mus musculus (Mouse).